Reading from the N-terminus, the 1151-residue chain is Chromosome partition protein Smc (1151 aa).

32–39 (PNGCGKSN) contacts ATP. 4 coiled-coil regions span residues 170–218 (ISGL…AARY), 342–379 (IGRL…ALGE), 407–508 (DSRT…REAQ), and 633–994 (LKQL…EGRE). 2 stretches are compositionally biased toward basic and acidic residues: residues 421-438 (RARE…RAAE) and 465-480 (DEAR…EARA). Disordered regions lie at residues 421 to 483 (RARE…AQRS), 806 to 826 (SAEL…AAEA), and 862 to 889 (LRAA…AEAR). A compositionally biased stretch (basic and acidic residues) spans 866–889 (QEAEREAERQAGESREARARAEAR).

This sequence belongs to the SMC family. In terms of assembly, homodimer.

The protein localises to the cytoplasm. Required for chromosome condensation and partitioning. This Cereibacter sphaeroides (strain ATCC 17029 / ATH 2.4.9) (Rhodobacter sphaeroides) protein is Chromosome partition protein Smc.